Consider the following 342-residue polypeptide: Isopentenyl-diphosphate delta-isomerase (342 aa).

11–12 (RK) lines the substrate pocket. FMN contacts are provided by residues serine 68, 69–71 (SMT), serine 99, and asparagine 127. 99–101 (SMR) contributes to the substrate binding site. Residue glutamate 163 coordinates Mg(2+). FMN-binding positions include lysine 194, threonine 224, and 295-296 (AG).

The protein belongs to the IPP isomerase type 2 family. As to quaternary structure, homooctamer. Dimer of tetramers. FMN is required as a cofactor. NADPH serves as cofactor. The cofactor is Mg(2+).

It localises to the cytoplasm. It carries out the reaction isopentenyl diphosphate = dimethylallyl diphosphate. Functionally, involved in the biosynthesis of isoprenoids. Catalyzes the 1,3-allylic rearrangement of the homoallylic substrate isopentenyl (IPP) to its allylic isomer, dimethylallyl diphosphate (DMAPP). This chain is Isopentenyl-diphosphate delta-isomerase, found in Rickettsia prowazekii (strain Madrid E).